Reading from the N-terminus, the 429-residue chain is Adenylosuccinate synthetase (429 aa).

Residues 12–18 (GDEGKGK) and 40–42 (GHT) each bind GTP. Asp13 functions as the Proton acceptor in the catalytic mechanism. Residues Asp13 and Gly40 each contribute to the Mg(2+) site. Residues 13-16 (DEGK), 38-41 (NAGH), Thr129, Arg143, Gln223, Thr238, and Arg302 each bind IMP. His41 acts as the Proton donor in catalysis. 298 to 304 (VVTGRKR) lines the substrate pocket. GTP is bound by residues Arg304, 330 to 332 (KLD), and 412 to 414 (STS).

It belongs to the adenylosuccinate synthetase family. As to quaternary structure, homodimer. It depends on Mg(2+) as a cofactor.

It is found in the cytoplasm. The catalysed reaction is IMP + L-aspartate + GTP = N(6)-(1,2-dicarboxyethyl)-AMP + GDP + phosphate + 2 H(+). The protein operates within purine metabolism; AMP biosynthesis via de novo pathway; AMP from IMP: step 1/2. Plays an important role in the de novo pathway of purine nucleotide biosynthesis. Catalyzes the first committed step in the biosynthesis of AMP from IMP. This Bartonella bacilliformis (strain ATCC 35685 / KC583 / Herrer 020/F12,63) protein is Adenylosuccinate synthetase.